Consider the following 98-residue polypeptide: Large ribosomal subunit protein bL28 (98 aa).

This sequence belongs to the bacterial ribosomal protein bL28 family.

This chain is Large ribosomal subunit protein bL28, found in Phenylobacterium zucineum (strain HLK1).